The primary structure comprises 41 residues: Ornatin-A3 (41 aa).

The short motif at 33–35 is the Cell attachment site element; the sequence is RGD.

The protein belongs to the ornatin family.

The protein localises to the secreted. In terms of biological role, potent inhibitor of fibrinogen interaction with platelet receptors expressed on glycoprotein IIb-IIIa complex. May prevent blood from clotting during either feeding and/or storage of ingested blood. In Placobdella ornata (Turtle leech), this protein is Ornatin-A3.